A 607-amino-acid polypeptide reads, in one-letter code: CRS2-associated factor 2, chloroplastic (607 aa).

Residues 1-75 (MSPPPPQRPS…GNGGNPAFRA (75 aa)) are disordered. The transit peptide at 1 to 79 (MSPPPPQRPS…NPAFRAPHLR (79 aa)) directs the protein to the chloroplast. CRM domains lie at 228 to 324 (EPLT…TRPR) and 346 to 442 (EGLT…YPKP). Residues 482 to 505 (KMFELWTNAIESSVALMLDDAEVD) form a CRS2 binding region. The tract at residues 550-576 (TEDEPETGTLEPQQHEFTESSDVAEDD) is disordered.

In terms of assembly, interacts with CRS2 and RNA. Part of large ribonucleo-protein complexes that include group IIB introns, CRS2 and CAF2.

It is found in the plastid. The protein localises to the chloroplast stroma. In terms of biological role, required for the splicing of group IIB introns in chloroplasts. Forms splicing particles with CRS2. Interacts with RNA and confers intron specificity of the splicing particles. The sequence is that of CRS2-associated factor 2, chloroplastic from Oryza sativa subsp. japonica (Rice).